We begin with the raw amino-acid sequence, 425 residues long: Glutamyl-tRNA reductase (425 aa).

Substrate is bound by residues 49-52, Ser-107, 112-114, and Gln-118; these read TCNR and EPQ. Cys-50 acts as the Nucleophile in catalysis. Position 187-192 (187-192) interacts with NADP(+); that stretch reads GAGETI.

Belongs to the glutamyl-tRNA reductase family. Homodimer.

It catalyses the reaction (S)-4-amino-5-oxopentanoate + tRNA(Glu) + NADP(+) = L-glutamyl-tRNA(Glu) + NADPH + H(+). The protein operates within porphyrin-containing compound metabolism; protoporphyrin-IX biosynthesis; 5-aminolevulinate from L-glutamyl-tRNA(Glu): step 1/2. Functionally, catalyzes the NADPH-dependent reduction of glutamyl-tRNA(Glu) to glutamate 1-semialdehyde (GSA). The polypeptide is Glutamyl-tRNA reductase (Pseudomonas syringae pv. syringae (strain B728a)).